Consider the following 138-residue polypeptide: MPTIQQLVRKGRATFLKKGKAPALDSCPQKRGVCVRVYTTTPKKPNSAMRKVARVRLTNSKEVNVYIPGEGHNLQEHSIVLVRGGRVKDLPGVRYHIVRGALDTAGVSGRMQRRSKYGAKFPKTGTGKTKAVPTKNKK.

Asp-89 carries the post-translational modification 3-methylthioaspartic acid. The segment at 107-138 (VSGRMQRRSKYGAKFPKTGTGKTKAVPTKNKK) is disordered.

This sequence belongs to the universal ribosomal protein uS12 family. Part of the 30S ribosomal subunit. Contacts proteins S8 and S17. May interact with IF1 in the 30S initiation complex.

In terms of biological role, with S4 and S5 plays an important role in translational accuracy. Interacts with and stabilizes bases of the 16S rRNA that are involved in tRNA selection in the A site and with the mRNA backbone. Located at the interface of the 30S and 50S subunits, it traverses the body of the 30S subunit contacting proteins on the other side and probably holding the rRNA structure together. The combined cluster of proteins S8, S12 and S17 appears to hold together the shoulder and platform of the 30S subunit. The sequence is that of Small ribosomal subunit protein uS12 from Azobacteroides pseudotrichonymphae genomovar. CFP2.